Reading from the N-terminus, the 513-residue chain is Cytochrome P450 1A2 (513 aa).

Residue Ser68 is glycosylated (O-linked (GlcNAc) serine). Position 225 (Phe225) interacts with substrate. Heme is bound at residue Cys456.

This sequence belongs to the cytochrome P450 family. In terms of assembly, interacts with PGRMC1; the interaction requires PGRMC1 homodimerization. Heme is required as a cofactor. Found in lung and liver.

Its subcellular location is the endoplasmic reticulum membrane. It localises to the microsome membrane. The catalysed reaction is an organic molecule + reduced [NADPH--hemoprotein reductase] + O2 = an alcohol + oxidized [NADPH--hemoprotein reductase] + H2O + H(+). It catalyses the reaction 17beta-estradiol + reduced [NADPH--hemoprotein reductase] + O2 = 2-hydroxy-17beta-estradiol + oxidized [NADPH--hemoprotein reductase] + H2O + H(+). It carries out the reaction 17beta-estradiol + reduced [NADPH--hemoprotein reductase] + O2 = 4-hydroxy-17beta-estradiol + oxidized [NADPH--hemoprotein reductase] + H2O + H(+). The enzyme catalyses estrone + reduced [NADPH--hemoprotein reductase] + O2 = 2-hydroxyestrone + oxidized [NADPH--hemoprotein reductase] + H2O + H(+). The catalysed reaction is estrone + reduced [NADPH--hemoprotein reductase] + O2 = 4-hydroxyestrone + oxidized [NADPH--hemoprotein reductase] + H2O + H(+). It catalyses the reaction cholesterol + reduced [NADPH--hemoprotein reductase] + O2 = 25-hydroxycholesterol + oxidized [NADPH--hemoprotein reductase] + H2O + H(+). It carries out the reaction all-trans-retinol + reduced [NADPH--hemoprotein reductase] + O2 = all-trans-retinal + oxidized [NADPH--hemoprotein reductase] + 2 H2O + H(+). The enzyme catalyses all-trans-retinal + reduced [NADPH--hemoprotein reductase] + O2 = all-trans-retinoate + oxidized [NADPH--hemoprotein reductase] + H2O + 2 H(+). The catalysed reaction is (5Z,8Z,11Z,14Z)-eicosatetraenoate + reduced [NADPH--hemoprotein reductase] + O2 = (14R,15S)-epoxy-(5Z,8Z,11Z)-eicosatrienoate + oxidized [NADPH--hemoprotein reductase] + H2O + H(+). It catalyses the reaction (5Z,8Z,11Z,14Z)-eicosatetraenoate + reduced [NADPH--hemoprotein reductase] + O2 = (14S,15R)-epoxy-(5Z,8Z,11Z)-eicosatrienoate + oxidized [NADPH--hemoprotein reductase] + H2O + H(+). It carries out the reaction (5Z,8Z,11Z,14Z,17Z)-eicosapentaenoate + reduced [NADPH--hemoprotein reductase] + O2 = (17R,18S)-epoxy-(5Z,8Z,11Z,14Z)-eicosatetraenoate + oxidized [NADPH--hemoprotein reductase] + H2O + H(+). The enzyme catalyses (4Z,7Z,10Z,13Z,16Z,19Z)-docosahexaenoate + reduced [NADPH--hemoprotein reductase] + O2 = (19R,20S)-epoxy-(4Z,7Z,10Z,13Z,16Z)-docosapentaenoate + oxidized [NADPH--hemoprotein reductase] + H2O + H(+). The catalysed reaction is (5S)-hydroperoxy-(6E,8Z,11Z,14Z)-eicosatetraenoate = 5-oxo-(6E,8Z,11Z,14Z)-eicosatetraenoate + H2O. It catalyses the reaction (12S)-hydroperoxy-(5Z,8Z,10E,14Z)-eicosatetraenoate = 12-oxo-(5Z,8Z,10E,14Z)-eicosatetraenoate + H2O. It carries out the reaction (15S)-hydroperoxy-(5Z,8Z,11Z,13E)-eicosatetraenoate = 15-oxo-(5Z,8Z,11Z,13E)-eicosatetraenoate + H2O. The enzyme catalyses (13S)-hydroperoxy-(9Z,11E)-octadecadienoate = 13-oxo-(9Z,11E)-octadecadienoate + H2O. The catalysed reaction is (5Z,8Z,11Z,14Z)-eicosatetraenoate + reduced [NADPH--hemoprotein reductase] + O2 = 13-hydroxy-(5Z,8Z,11Z,14Z)-eicosatetraenoate + oxidized [NADPH--hemoprotein reductase] + H2O + H(+). It catalyses the reaction (5Z,8Z,11Z,14Z)-eicosatetraenoate + reduced [NADPH--hemoprotein reductase] + O2 = 19-hydroxy-(5Z,8Z,11Z,14Z)-eicosatetraenoate + oxidized [NADPH--hemoprotein reductase] + H2O + H(+). It carries out the reaction (9Z,12Z)-octadecadienoate + reduced [NADPH--hemoprotein reductase] + O2 = 11-hydroxy-(9Z,12Z)-octadecadienoate + oxidized [NADPH--hemoprotein reductase] + H2O + H(+). Its pathway is cofactor metabolism; retinol metabolism. It functions in the pathway steroid metabolism; cholesterol metabolism. It participates in lipid metabolism; arachidonate metabolism. Its function is as follows. A cytochrome P450 monooxygenase involved in the metabolism of various endogenous substrates, including fatty acids, steroid hormones and vitamins. Mechanistically, uses molecular oxygen inserting one oxygen atom into a substrate, and reducing the second into a water molecule, with two electrons provided by NADPH via cytochrome P450 reductase (NADPH--hemoprotein reductase). Catalyzes the hydroxylation of carbon-hydrogen bonds. Exhibits high catalytic activity for the formation of hydroxyestrogens from estrone (E1) and 17beta-estradiol (E2), namely 2-hydroxy E1 and E2. Metabolizes cholesterol toward 25-hydroxycholesterol, a physiological regulator of cellular cholesterol homeostasis. May act as a major enzyme for all-trans retinoic acid biosynthesis in the liver. Catalyzes two successive oxidative transformation of all-trans retinol to all-trans retinal and then to the active form all-trans retinoic acid. Primarily catalyzes stereoselective epoxidation of the last double bond of polyunsaturated fatty acids (PUFA), displaying a strong preference for the (R,S) stereoisomer. Catalyzes bisallylic hydroxylation and omega-1 hydroxylation of PUFA. May also participate in eicosanoids metabolism by converting hydroperoxide species into oxo metabolites (lipoxygenase-like reaction, NADPH-independent). Plays a role in the oxidative metabolism of xenobiotics. Catalyzes the N-hydroxylation of heterocyclic amines and the O-deethylation of phenacetin. Metabolizes caffeine via N3-demethylation. In Mesocricetus auratus (Golden hamster), this protein is Cytochrome P450 1A2 (CYP1A2).